Reading from the N-terminus, the 705-residue chain is MFPQEEKLIRERLGREPNDVERAMLEVMWSEHVSYKSSRKWLKLLPTKNEHVVLGPGEDAGIIKFDDKTWIVIGIESHNHPSAVEPYGGAATGVGGIVRDILCMGARPIALLDPIRFGPLEKEKNRYLFEYVVKGISDYGNRIGVPTVGGETEFDESLDNYTLVNVACVGIMKPEHLVHSYVTEPGLKLIIVGNRTGRDGIHGVTFASEELSENAEEEDRSAVQIPDPFTEKLLIEATLEAVYTGKVRALKDLGGGGLTCAASEMVGKRGFGAIIYADKVLLREPGMTPLEVMISESQERMLFAVRPEDVEELARIFEKYELEWSVVGEVIEEPKFIVYWKGSKVAELPIDLLTEVPTIEWPMKEYKIEEEVGIPRISLQEAFEKVWRSPNIVAKRWIWEQYDHEVQGRTVVKPGFDSAVLKINEEYGIAITADGNPNHCYLNPYHGAMGLVAEVVRNLVSVGAKPLALVDNLNFASPERPEVYWSFAETVKGLADAAKAFNLAYVSGNVSFYNEIVDKPIKPTPVVAGVGKVKLSKIPKGPNKGDVVTLVGETKRELGGSELYRVLGIRKGIAPRVNLEVERKNAESILRLINASLVSFVHDLSRGGLLVALAEVAALFNVGMEVTIKTDMNPVEFAFSESHGRYLVVLPERKLEEAREITDLKVIGRIIGSNSFSVKINDEVLLWNLDKLKDVYWNTLYRLMD.

Residue His32 is part of the active site. Residue Tyr35 coordinates ATP. Glu76 contributes to the Mg(2+) binding site. Residues 77–80 and Arg99 contribute to the substrate site; that span reads SHNH. The active-site Proton acceptor is His78. Asp100 contributes to the Mg(2+) binding site. Gln224 provides a ligand contact to substrate. Residue Asp252 coordinates Mg(2+). 296 to 298 is a binding site for substrate; the sequence is ESQ. ATP contacts are provided by Asp471 and Gly508. Asn509 provides a ligand contact to Mg(2+). Position 511 (Ser511) interacts with substrate.

Belongs to the FGAMS family. In terms of assembly, monomer. Part of the FGAM synthase complex composed of 1 PurL, 1 PurQ and 2 PurS subunits.

It is found in the cytoplasm. The catalysed reaction is N(2)-formyl-N(1)-(5-phospho-beta-D-ribosyl)glycinamide + L-glutamine + ATP + H2O = 2-formamido-N(1)-(5-O-phospho-beta-D-ribosyl)acetamidine + L-glutamate + ADP + phosphate + H(+). It participates in purine metabolism; IMP biosynthesis via de novo pathway; 5-amino-1-(5-phospho-D-ribosyl)imidazole from N(2)-formyl-N(1)-(5-phospho-D-ribosyl)glycinamide: step 1/2. Its function is as follows. Part of the phosphoribosylformylglycinamidine synthase complex involved in the purines biosynthetic pathway. Catalyzes the ATP-dependent conversion of formylglycinamide ribonucleotide (FGAR) and glutamine to yield formylglycinamidine ribonucleotide (FGAM) and glutamate. The FGAM synthase complex is composed of three subunits. PurQ produces an ammonia molecule by converting glutamine to glutamate. PurL transfers the ammonia molecule to FGAR to form FGAM in an ATP-dependent manner. PurS interacts with PurQ and PurL and is thought to assist in the transfer of the ammonia molecule from PurQ to PurL. This is Phosphoribosylformylglycinamidine synthase subunit PurL from Pyrococcus horikoshii (strain ATCC 700860 / DSM 12428 / JCM 9974 / NBRC 100139 / OT-3).